Here is a 286-residue protein sequence, read N- to C-terminus: Movement protein (286 aa).

It belongs to the tenuiviruses pc4 protein family. Interacts with the rice proteins DJA6 and HSP17.9A.

The protein resides in the host cytoplasm. Functionally, transports viral genome to neighboring plant cells directly through plasmosdesmata, without any budding. The movement protein allows efficient cell to cell propagation, by bypassing the host cell wall barrier. The polypeptide is Movement protein (Avena sativa (Oat)).